A 115-amino-acid chain; its full sequence is MFGGIMEFKALFIGVFLIVFLGCIGSTLHYKKQAETTALLLKQSEQTIKQNKVMLQRYETQNAKLTSQLNQANKKAEQRSQQLKDVLNNAENKNWTYGRVPNDVAGVLNHRTQAK.

The chain crosses the membrane as a helical span at residues A10–L28.

It is found in the host membrane. This is an uncharacterized protein from Haemophilus influenzae (Bacteriophage HP1).